The primary structure comprises 346 residues: N-acetyl-gamma-glutamyl-phosphate reductase (346 aa).

Residue cysteine 150 is part of the active site.

The protein belongs to the NAGSA dehydrogenase family. Type 1 subfamily.

The protein localises to the cytoplasm. It catalyses the reaction N-acetyl-L-glutamate 5-semialdehyde + phosphate + NADP(+) = N-acetyl-L-glutamyl 5-phosphate + NADPH + H(+). It functions in the pathway amino-acid biosynthesis; L-arginine biosynthesis; N(2)-acetyl-L-ornithine from L-glutamate: step 3/4. In terms of biological role, catalyzes the NADPH-dependent reduction of N-acetyl-5-glutamyl phosphate to yield N-acetyl-L-glutamate 5-semialdehyde. This chain is N-acetyl-gamma-glutamyl-phosphate reductase, found in Desulforamulus reducens (strain ATCC BAA-1160 / DSM 100696 / MI-1) (Desulfotomaculum reducens).